The following is an 870-amino-acid chain: DNA topoisomerase 1 (870 aa).

Positions 1–128 (MKSPRFRHSQ…RVYKSSFEAA (128 aa)) constitute a Toprim domain. The Topo IA-type catalytic domain maps to 143–578 (YDGLAYSAKA…QTNAFVQKIT (436 aa)). An interaction with DNA region spans residues 180-185 (SSGRVQ). The O-(5'-phospho-DNA)-tyrosine intermediate role is filled by Y299. 3 consecutive C4-type zinc fingers follow at residues 603 to 627 (CQCP…HPNC), 693 to 717 (CPKC…QNGC), and 784 to 807 (CPLC…KRGC).

Belongs to the type IA topoisomerase family. As to quaternary structure, monomer.

It carries out the reaction ATP-independent breakage of single-stranded DNA, followed by passage and rejoining.. Functionally, releases the supercoiling and torsional tension of DNA, which is introduced during the DNA replication and transcription, by transiently cleaving and rejoining one strand of the DNA duplex. Introduces a single-strand break via transesterification at a target site in duplex DNA. The scissile phosphodiester is attacked by the catalytic tyrosine of the enzyme, resulting in the formation of a DNA-(5'-phosphotyrosyl)-enzyme intermediate and the expulsion of a 3'-OH DNA strand. The free DNA strand then undergoes passage around the unbroken strand, thus removing DNA supercoils. Finally, in the religation step, the DNA 3'-OH attacks the covalent intermediate to expel the active-site tyrosine and restore the DNA phosphodiester backbone. The chain is DNA topoisomerase 1 (topX) from Bacillus anthracis.